We begin with the raw amino-acid sequence, 71 residues long: Sec-independent protein translocase protein TatA (71 aa).

A helical membrane pass occupies residues 1–21 (MGSFSIWHWLIVLVVVLLLFG). The segment at 47–71 (AEEAKTVEHRTDEPVGEVKQKASKS) is disordered. A compositionally biased stretch (basic and acidic residues) spans 49–71 (EAKTVEHRTDEPVGEVKQKASKS).

The protein belongs to the TatA/E family. In terms of assembly, the Tat system comprises two distinct complexes: a TatABC complex, containing multiple copies of TatA, TatB and TatC subunits, and a separate TatA complex, containing only TatA subunits. Substrates initially bind to the TatABC complex, which probably triggers association of the separate TatA complex to form the active translocon.

It is found in the cell inner membrane. Functionally, part of the twin-arginine translocation (Tat) system that transports large folded proteins containing a characteristic twin-arginine motif in their signal peptide across membranes. TatA could form the protein-conducting channel of the Tat system. In Chelativorans sp. (strain BNC1), this protein is Sec-independent protein translocase protein TatA.